Consider the following 365-residue polypeptide: Spermidine/putrescine import ATP-binding protein PotA (365 aa).

In terms of domain architecture, ABC transporter spans 7-237; it reads LTLADITKRF…PNNLFVASFI (231 aa). An ATP-binding site is contributed by 39 to 46; the sequence is GPSGCGKT.

It belongs to the ABC transporter superfamily. Spermidine/putrescine importer (TC 3.A.1.11.1) family. As to quaternary structure, the complex is composed of two ATP-binding proteins (PotA), two transmembrane proteins (PotB and PotC) and a solute-binding protein (PotD).

The protein localises to the cell inner membrane. The catalysed reaction is ATP + H2O + polyamine-[polyamine-binding protein]Side 1 = ADP + phosphate + polyamineSide 2 + [polyamine-binding protein]Side 1.. In terms of biological role, part of the ABC transporter complex PotABCD involved in spermidine/putrescine import. Responsible for energy coupling to the transport system. The sequence is that of Spermidine/putrescine import ATP-binding protein PotA from Hahella chejuensis (strain KCTC 2396).